The primary structure comprises 367 residues: Flagellar P-ring protein (367 aa).

Positions 1-21 (MYVFKALAGIVLALVATLAHA) are cleaved as a signal peptide.

This sequence belongs to the FlgI family. In terms of assembly, the basal body constitutes a major portion of the flagellar organelle and consists of four rings (L,P,S, and M) mounted on a central rod.

Its subcellular location is the periplasm. It localises to the bacterial flagellum basal body. In terms of biological role, assembles around the rod to form the L-ring and probably protects the motor/basal body from shearing forces during rotation. The polypeptide is Flagellar P-ring protein (Salmonella paratyphi C (strain RKS4594)).